Here is a 1380-residue protein sequence, read N- to C-terminus: Inverted formin-2 (1380 aa).

The GBD/FH3 domain occupies 1–330 (MSLKEGAHTK…RAVLLADDCQ (330 aa)). Disordered regions lie at residues 341–391 (LVTS…SGIP) and 440–541 (ISTS…PPPL). Over residues 343-352 (TSKKHPSKEK) the composition is skewed to basic residues. Residues 367-385 (QTDKPKDESCEEKTVKKDP) show a composition bias toward basic and acidic residues. The FH1 domain occupies 432-592 (VVSNAIDRIS…DYSLGYLPKA (161 aa)). 2 stretches are compositionally biased toward pro residues: residues 446-470 (LPPP…PPLP) and 478-541 (TPPP…PPPL). In terms of domain architecture, FH2 spans 593–981 (YFKVNKPTLK…AEKRKKQLAD (389 aa)). 2 coiled-coil regions span residues 879 to 930 (LKKL…KLAD) and 956 to 991 (LKAK…KGEN). Residues 1009 to 1024 (DALLADIKKGFQLRKT) enclose the WH2 domain. 3 disordered regions span residues 1026 to 1049 (KTKT…DGTD), 1188 to 1244 (HKER…LSEA), and 1260 to 1380 (FQSS…CVVQ). Polar residues-rich tracts occupy residues 1206-1244 (GTES…LSEA), 1260-1284 (FQSS…QAQR), and 1294-1303 (TRDTTVTEGS). Basic and acidic residues predominate over residues 1306–1322 (EEDKCNDEGYPEHKTMG). The span at 1328 to 1339 (SSSHSTTLQQSS) shows a compositional bias: low complexity. Positions 1345 to 1359 (VKRGSSKHKKKRRSS) are enriched in basic residues.

The protein belongs to the formin homology family.

The chain is Inverted formin-2 (inf2) from Xenopus tropicalis (Western clawed frog).